Here is a 240-residue protein sequence, read N- to C-terminus: UDP-2,3-diacylglucosamine hydrolase (240 aa).

Mn(2+) contacts are provided by D8, H10, D41, N79, and H114. A substrate-binding site is contributed by 79 to 80 (NR). Residues D122, S160, N164, K167, and H195 each contribute to the substrate site. Residues H195 and H197 each contribute to the Mn(2+) site.

This sequence belongs to the LpxH family. Mn(2+) serves as cofactor.

It localises to the cell inner membrane. It carries out the reaction UDP-2-N,3-O-bis[(3R)-3-hydroxytetradecanoyl]-alpha-D-glucosamine + H2O = 2-N,3-O-bis[(3R)-3-hydroxytetradecanoyl]-alpha-D-glucosaminyl 1-phosphate + UMP + 2 H(+). It participates in glycolipid biosynthesis; lipid IV(A) biosynthesis; lipid IV(A) from (3R)-3-hydroxytetradecanoyl-[acyl-carrier-protein] and UDP-N-acetyl-alpha-D-glucosamine: step 4/6. Hydrolyzes the pyrophosphate bond of UDP-2,3-diacylglucosamine to yield 2,3-diacylglucosamine 1-phosphate (lipid X) and UMP by catalyzing the attack of water at the alpha-P atom. Involved in the biosynthesis of lipid A, a phosphorylated glycolipid that anchors the lipopolysaccharide to the outer membrane of the cell. The sequence is that of UDP-2,3-diacylglucosamine hydrolase from Klebsiella pneumoniae subsp. pneumoniae (strain ATCC 700721 / MGH 78578).